A 1235-amino-acid chain; its full sequence is Phosphorylase b kinase regulatory subunit alpha, liver isoform (1235 aa).

Residues Ser697, Ser731, and Ser737 each carry the phosphoserine modification. A calmodulin-binding region spans residues 808-838; that stretch reads LSELYGKAGLNQEWGLIRYISGLLRKKVEVL. The segment covering 976-986 has biased composition (low complexity); sequence SSASSPAISIH. Residues 976-1002 are disordered; that stretch reads SSASSPAISIHEVGHTGVTKTERSGIN. Residues Ser984, Ser1016, and Ser1044 each carry the phosphoserine modification. A compositionally biased stretch (low complexity) spans 1032-1053; that stretch reads AYSKSVRSSTPSSPTGTSSSDS. The segment at 1032–1060 is disordered; that stretch reads AYSKSVRSSTPSSPTGTSSSDSGGHHISW. The segment at 1059–1099 is calmodulin-binding; the sequence is SWGERQGQWLRRRRLDGAINRVPVGFYQRVWKILQKCHGLS. Cys1232 is lipidated: S-farnesyl cysteine.

The protein belongs to the phosphorylase b kinase regulatory chain family. In terms of assembly, hexadecamer of 4 heterotetramers, each composed of alpha, beta, gamma, and delta subunits. Alpha (PHKA1 or PHKA2) and beta (PHKB) are regulatory subunits, gamma (PHKG1 or PHKG2) is the catalytic subunit, and delta is calmodulin. Post-translationally, although the final Cys may be farnesylated, the terminal tripeptide is probably not removed, and the C-terminus is not methylated. As to expression, predominantly expressed in liver and other non-muscle tissues.

It localises to the cell membrane. Its pathway is glycan biosynthesis; glycogen metabolism. By phosphorylation of various serine residues and by calcium. Functionally, phosphorylase b kinase catalyzes the phosphorylation of serine in certain substrates, including troponin I. The alpha chain may bind calmodulin. This is Phosphorylase b kinase regulatory subunit alpha, liver isoform (PHKA2) from Oryctolagus cuniculus (Rabbit).